The primary structure comprises 236 residues: MLQFILRRIVKALLWFAAGSVLVVLVLRWVPPPGTALMVERKVESWVDGEPIDLQRDWEPWDRISDNLKIAVIAGEDQKFAEHWGFDVDAIQAAILHNERGGSIRGASTLSQQVSKNLFLWSGRSYLRKGLEAWFTMLIELLWSKERILEVYLNSVEWDEGVFGAQAAAQHHFRTNASALSVQQASYLAAVLPNPREWSASHPSSYVSRRAGWIRQQMRQLGGDEYLQGLNSSRRW.

The chain crosses the membrane as a helical span at residues Ala12–Pro31.

The protein belongs to the glycosyltransferase 51 family.

The protein localises to the cell inner membrane. It carries out the reaction [GlcNAc-(1-&gt;4)-Mur2Ac(oyl-L-Ala-gamma-D-Glu-L-Lys-D-Ala-D-Ala)](n)-di-trans,octa-cis-undecaprenyl diphosphate + beta-D-GlcNAc-(1-&gt;4)-Mur2Ac(oyl-L-Ala-gamma-D-Glu-L-Lys-D-Ala-D-Ala)-di-trans,octa-cis-undecaprenyl diphosphate = [GlcNAc-(1-&gt;4)-Mur2Ac(oyl-L-Ala-gamma-D-Glu-L-Lys-D-Ala-D-Ala)](n+1)-di-trans,octa-cis-undecaprenyl diphosphate + di-trans,octa-cis-undecaprenyl diphosphate + H(+). It participates in cell wall biogenesis; peptidoglycan biosynthesis. In terms of biological role, peptidoglycan polymerase that catalyzes glycan chain elongation from lipid-linked precursors. In Pseudomonas savastanoi pv. phaseolicola (strain 1448A / Race 6) (Pseudomonas syringae pv. phaseolicola (strain 1448A / Race 6)), this protein is Biosynthetic peptidoglycan transglycosylase.